The sequence spans 515 residues: 1-pyrroline-5-carboxylate dehydrogenase (515 aa).

Active-site residues include glutamate 286 and cysteine 320.

It belongs to the aldehyde dehydrogenase family. RocA subfamily.

The enzyme catalyses L-glutamate 5-semialdehyde + NAD(+) + H2O = L-glutamate + NADH + 2 H(+). Its pathway is amino-acid degradation; L-proline degradation into L-glutamate; L-glutamate from L-proline: step 2/2. The sequence is that of 1-pyrroline-5-carboxylate dehydrogenase from Oceanobacillus iheyensis (strain DSM 14371 / CIP 107618 / JCM 11309 / KCTC 3954 / HTE831).